The primary structure comprises 287 residues: Agamous-like MADS-box protein AGL53 (287 aa).

Positions 30 to 78 (STAKKTTNLSMREQTMFKKALELSTLCNIDVCVIYYGRDGKLIKTWPED) constitute an MADS-box domain. Positions 151–171 (EFGQTRAVSSTTNPLSPPPSL) are disordered.

In terms of assembly, interacts with MEE14/CBP1.

It localises to the nucleus. Probable transcription factor that may function in the maintenance of the proper function of the central cell in pollen tube attraction. The protein is Agamous-like MADS-box protein AGL53 of Arabidopsis thaliana (Mouse-ear cress).